Reading from the N-terminus, the 466-residue chain is MTGDKLSNQMWGGRFAAGPAAIMEEINASIDFDQKLYRQDIEGSLSHAAMLAQTKIISHSDYEKIVHGLQLIRQEIETGSFTFSRKLEDIHMNIEARLSELIGPVAGRLHTARSRNDQVAVDFRLWVREAAQKIAQALKDLMEQLLMRAEQHADTLMPGFTHLQTAQPVTFGHYMMAYVEMFGRDLSRMRDAIERMNESPLGAAALAGTGFPIDRFMTAQALGFREPTRNSIDSVSDRDFALEFLSAGALCAMHLSRLAEEIILWSSAQFHFIRLSDAFSTGSSIMPQKRNPDAAELVRAKAGRLNAALMGLLTVMKGLPLAYSKDMQEDKEYVFDGVLNLELSLAAMMGIISDLEVNKEAMKQAAGSGYAIATDLADWCVRELGLPFREAHHITGRAVALAEQKKCSLDELSLDEFQTLHPDINAAVFDVLTIEKSVESRNSFGGTAPSEVLRQVAYWKQHLVTA.

Belongs to the lyase 1 family. Argininosuccinate lyase subfamily.

The protein resides in the cytoplasm. The enzyme catalyses 2-(N(omega)-L-arginino)succinate = fumarate + L-arginine. Its pathway is amino-acid biosynthesis; L-arginine biosynthesis; L-arginine from L-ornithine and carbamoyl phosphate: step 3/3. In Bartonella bacilliformis (strain ATCC 35685 / KC583 / Herrer 020/F12,63), this protein is Argininosuccinate lyase.